We begin with the raw amino-acid sequence, 257 residues long: MLIIDIGNTNIKFGICINNQIIQTLRISSQPRRTADEYFFFLNTIINQLNINNFTITHIIISSVVPSITKPMIELSTHYFNITPTIINNQHADICNIKIDLNDKLLGSDRLASIIGAVTLYPNKNLLVISMGTATVFNLISKERSIYGQVITPGAHIMAQSMRQHTALLPEISQIKVNKVVHNTLFYAIEAGVYWGYIAMVEGIVKQILHEENKDLHIVATGGNSILFIDHKNFIKNIDPDLTMKGMIYLHNMLFNK.

An ATP-binding site is contributed by 5-12 (DIGNTNIK). 107–110 (GSDR) lines the substrate pocket. The Proton acceptor role is filled by D109. Residue T133 participates in ATP binding.

It belongs to the type III pantothenate kinase family. Homodimer. NH4(+) serves as cofactor. The cofactor is K(+).

It localises to the cytoplasm. The catalysed reaction is (R)-pantothenate + ATP = (R)-4'-phosphopantothenate + ADP + H(+). It functions in the pathway cofactor biosynthesis; coenzyme A biosynthesis; CoA from (R)-pantothenate: step 1/5. In terms of biological role, catalyzes the phosphorylation of pantothenate (Pan), the first step in CoA biosynthesis. This is Type III pantothenate kinase from Ehrlichia ruminantium (strain Welgevonden).